A 179-amino-acid chain; its full sequence is Acireductone dioxygenase (179 aa).

Positions 99, 101, 105, and 143 each coordinate Fe(2+). Ni(2+) is bound by residues histidine 99, histidine 101, glutamate 105, and histidine 143.

This sequence belongs to the acireductone dioxygenase (ARD) family. Monomer. Requires Fe(2+) as cofactor. Ni(2+) is required as a cofactor.

It carries out the reaction 1,2-dihydroxy-5-(methylsulfanyl)pent-1-en-3-one + O2 = 3-(methylsulfanyl)propanoate + CO + formate + 2 H(+). The enzyme catalyses 1,2-dihydroxy-5-(methylsulfanyl)pent-1-en-3-one + O2 = 4-methylsulfanyl-2-oxobutanoate + formate + 2 H(+). Its pathway is amino-acid biosynthesis; L-methionine biosynthesis via salvage pathway; L-methionine from S-methyl-5-thio-alpha-D-ribose 1-phosphate: step 5/6. Functionally, catalyzes 2 different reactions between oxygen and the acireductone 1,2-dihydroxy-3-keto-5-methylthiopentene (DHK-MTPene) depending upon the metal bound in the active site. Fe-containing acireductone dioxygenase (Fe-ARD) produces formate and 2-keto-4-methylthiobutyrate (KMTB), the alpha-ketoacid precursor of methionine in the methionine recycle pathway. Ni-containing acireductone dioxygenase (Ni-ARD) produces methylthiopropionate, carbon monoxide and formate, and does not lie on the methionine recycle pathway. This Sulfurihydrogenibium sp. (strain YO3AOP1) protein is Acireductone dioxygenase.